The chain runs to 148 residues: NADPH-dependent 7-cyano-7-deazaguanine reductase (148 aa).

The active-site Thioimide intermediate is Cys-50. The active-site Proton donor is the Asp-57. Substrate contacts are provided by residues Val-72–Ser-74 and His-91–Glu-92.

This sequence belongs to the GTP cyclohydrolase I family. QueF type 1 subfamily.

The protein resides in the cytoplasm. It catalyses the reaction 7-aminomethyl-7-carbaguanine + 2 NADP(+) = 7-cyano-7-deazaguanine + 2 NADPH + 3 H(+). Its pathway is tRNA modification; tRNA-queuosine biosynthesis. Functionally, catalyzes the NADPH-dependent reduction of 7-cyano-7-deazaguanine (preQ0) to 7-aminomethyl-7-deazaguanine (preQ1). The sequence is that of NADPH-dependent 7-cyano-7-deazaguanine reductase from Helicobacter pylori (strain HPAG1).